The sequence spans 67 residues: Large ribosomal subunit protein uL29 (67 aa).

The protein belongs to the universal ribosomal protein uL29 family.

The protein is Large ribosomal subunit protein uL29 of Pelotomaculum thermopropionicum (strain DSM 13744 / JCM 10971 / SI).